The following is a 398-amino-acid chain: S-adenosylmethionine synthase (398 aa).

Position 16 (H16) interacts with ATP. D18 contributes to the Mg(2+) binding site. Residue E51 coordinates K(+). The L-methionine site is built by E64 and Q108. The tract at residues Q108–A118 is flexible loop. ATP contacts are provided by residues D176 to K178, K242 to F243, D251, R257 to K258, A274, and K278. D251 is an L-methionine binding site. K282 is an L-methionine binding site.

The protein belongs to the AdoMet synthase family. In terms of assembly, homotetramer; dimer of dimers. Mg(2+) serves as cofactor. Requires K(+) as cofactor.

It is found in the cytoplasm. It carries out the reaction L-methionine + ATP + H2O = S-adenosyl-L-methionine + phosphate + diphosphate. The protein operates within amino-acid biosynthesis; S-adenosyl-L-methionine biosynthesis; S-adenosyl-L-methionine from L-methionine: step 1/1. Its function is as follows. Catalyzes the formation of S-adenosylmethionine (AdoMet) from methionine and ATP. The overall synthetic reaction is composed of two sequential steps, AdoMet formation and the subsequent tripolyphosphate hydrolysis which occurs prior to release of AdoMet from the enzyme. This chain is S-adenosylmethionine synthase, found in Nitrobacter hamburgensis (strain DSM 10229 / NCIMB 13809 / X14).